Consider the following 235-residue polypeptide: Aspartate/glutamate leucyltransferase (235 aa).

This sequence belongs to the R-transferase family. Bpt subfamily.

Its subcellular location is the cytoplasm. The catalysed reaction is N-terminal L-glutamyl-[protein] + L-leucyl-tRNA(Leu) = N-terminal L-leucyl-L-glutamyl-[protein] + tRNA(Leu) + H(+). The enzyme catalyses N-terminal L-aspartyl-[protein] + L-leucyl-tRNA(Leu) = N-terminal L-leucyl-L-aspartyl-[protein] + tRNA(Leu) + H(+). In terms of biological role, functions in the N-end rule pathway of protein degradation where it conjugates Leu from its aminoacyl-tRNA to the N-termini of proteins containing an N-terminal aspartate or glutamate. This Pseudomonas syringae pv. tomato (strain ATCC BAA-871 / DC3000) protein is Aspartate/glutamate leucyltransferase.